Here is a 101-residue protein sequence, read N- to C-terminus: Large ribosomal subunit protein eL21 (101 aa).

A compositionally biased stretch (basic residues) spans 1–18; the sequence is MVKHSKGYRTRSRSLLRK. Positions 1–24 are disordered; that stretch reads MVKHSKGYRTRSRSLLRKSPRERG.

Belongs to the eukaryotic ribosomal protein eL21 family.

The polypeptide is Large ribosomal subunit protein eL21 (rpl21e) (Saccharolobus solfataricus (strain ATCC 35092 / DSM 1617 / JCM 11322 / P2) (Sulfolobus solfataricus)).